The chain runs to 166 residues: Cold-inducible RNA-binding protein B (166 aa).

The RRM domain occupies 5–83; sequence GKLFIGGLNF…RQIRVDQAGK (79 aa). The interval 68-166 is disordered; the sequence is GKAVDGRQIR…DSYDSYATHE (99 aa). The segment covering 92-115 has biased composition (gly residues); it reads YRGGSSGGRGFFRGGRGRGGGDRG. Positions 133 to 149 are enriched in low complexity; sequence GSRDYYSSGRSQGSYGD. Basic and acidic residues predominate over residues 157–166; the sequence is DSYDSYATHE.

In terms of assembly, interacts with prmt1. Interacts with elavl1/elrA (via RRM3). Associates with ribosomes. In terms of processing, methylated on arginine residues within RGG motifs. Methylation by prmt1 promotes cytoplasmic accumulation. In terms of tissue distribution, in adults, most abundant in testis, ovary, brain and liver, with lower expression in kidney and heart.

The protein localises to the nucleus. It localises to the nucleoplasm. The protein resides in the cytoplasm. Cold-inducible mRNA binding protein. Acts cooperatively with elavl1/elrA to stabilize AU-rich element (ARE)-containing mRNAs by binding to them and inhibiting their deadenylation. Essential for embryonic gastrulation and neural development, acting to maintain the expression of a set of adhesion molecules, and cell movement during embryogenesis. Required for pronephros development. This is Cold-inducible RNA-binding protein B (cirbp-b) from Xenopus laevis (African clawed frog).